A 463-amino-acid polypeptide reads, in one-letter code: Chromosomal replication initiator protein DnaA (463 aa).

The segment at 1–83 (MSTNQIILTD…LQLFQHYNNT (83 aa)) is domain I, interacts with DnaA modulators. The interval 83–124 (TIKSIEIITKELPGTTQTVTELPTKTFADIGSSELNSENIFS) is domain II. A domain III, AAA+ region region spans residues 125 to 343 (TLDVRFTFDN…GALNKVIAHS (219 aa)). The ATP site is built by Gly-171, Gly-173, Lys-174, and Thr-175. The domain IV, binds dsDNA stretch occupies residues 344 to 463 (NFTLKEITLE…IHLLMKILQN (120 aa)).

It belongs to the DnaA family. In terms of assembly, oligomerizes as a right-handed, spiral filament on DNA at oriC.

It localises to the cytoplasm. Functionally, plays an essential role in the initiation and regulation of chromosomal replication. ATP-DnaA binds to the origin of replication (oriC) to initiate formation of the DNA replication initiation complex once per cell cycle. Binds the DnaA box (a 9 base pair repeat at the origin) and separates the double-stranded (ds)DNA. Forms a right-handed helical filament on oriC DNA; dsDNA binds to the exterior of the filament while single-stranded (ss)DNA is stabiized in the filament's interior. The ATP-DnaA-oriC complex binds and stabilizes one strand of the AT-rich DNA unwinding element (DUE), permitting loading of DNA polymerase. After initiation quickly degrades to an ADP-DnaA complex that is not apt for DNA replication. Binds acidic phospholipids. In Rickettsia africae (strain ESF-5), this protein is Chromosomal replication initiator protein DnaA.